A 208-amino-acid polypeptide reads, in one-letter code: Thymidylate kinase (208 aa).

Residue 7–14 (GIDGSGKS) participates in ATP binding.

This sequence belongs to the thymidylate kinase family.

The enzyme catalyses dTMP + ATP = dTDP + ADP. Its function is as follows. Phosphorylation of dTMP to form dTDP in both de novo and salvage pathways of dTTP synthesis. The sequence is that of Thymidylate kinase from Kosmotoga olearia (strain ATCC BAA-1733 / DSM 21960 / TBF 19.5.1).